Here is a 154-residue protein sequence, read N- to C-terminus: MRILGIDPGLARVGYGVIDIQDGCQRMLDCGIIQTNSDRSDGDRMVEIAGDLRQLIRIWRPELAAVEKFFFYRSSNTINVVQARGVVVMTLARFKIPMVEFPPMQIKLAVAGFGHAEKDEVLEAVMRELSLEEPPRPDDAADALAVALTAWLQR.

Residues aspartate 7, glutamate 67, and aspartate 139 contribute to the active site. Residues aspartate 7, glutamate 67, and aspartate 139 each contribute to the Mg(2+) site.

It belongs to the RuvC family. In terms of assembly, homodimer which binds Holliday junction (HJ) DNA. The HJ becomes 2-fold symmetrical on binding to RuvC with unstacked arms; it has a different conformation from HJ DNA in complex with RuvA. In the full resolvosome a probable DNA-RuvA(4)-RuvB(12)-RuvC(2) complex forms which resolves the HJ. The cofactor is Mg(2+).

Its subcellular location is the cytoplasm. It carries out the reaction Endonucleolytic cleavage at a junction such as a reciprocal single-stranded crossover between two homologous DNA duplexes (Holliday junction).. The RuvA-RuvB-RuvC complex processes Holliday junction (HJ) DNA during genetic recombination and DNA repair. Endonuclease that resolves HJ intermediates. Cleaves cruciform DNA by making single-stranded nicks across the HJ at symmetrical positions within the homologous arms, yielding a 5'-phosphate and a 3'-hydroxyl group; requires a central core of homology in the junction. The consensus cleavage sequence is 5'-(A/T)TT(C/G)-3'. Cleavage occurs on the 3'-side of the TT dinucleotide at the point of strand exchange. HJ branch migration catalyzed by RuvA-RuvB allows RuvC to scan DNA until it finds its consensus sequence, where it cleaves and resolves the cruciform DNA. The protein is Crossover junction endodeoxyribonuclease RuvC of Synechococcus sp. (strain CC9605).